A 1167-amino-acid chain; its full sequence is Pesticidal crystal protein Cry21Aa (1167 aa).

Belongs to the delta endotoxin family.

Its function is as follows. Endotoxin with nematicidal activity. This is Pesticidal crystal protein Cry21Aa (cry21Aa) from Bacillus thuringiensis.